The sequence spans 632 residues: tRNA uridine 5-carboxymethylaminomethyl modification enzyme MnmG (632 aa).

Residues Gly13–Gly18, Val125, and Ser180 each bind FAD. Gly273–Phe287 is a binding site for NAD(+). Gln370 is an FAD binding site.

The protein belongs to the MnmG family. As to quaternary structure, homodimer. Heterotetramer of two MnmE and two MnmG subunits. Requires FAD as cofactor.

It localises to the cytoplasm. Its function is as follows. NAD-binding protein involved in the addition of a carboxymethylaminomethyl (cmnm) group at the wobble position (U34) of certain tRNAs, forming tRNA-cmnm(5)s(2)U34. The sequence is that of tRNA uridine 5-carboxymethylaminomethyl modification enzyme MnmG from Vibrio vulnificus (strain YJ016).